The sequence spans 67 residues: Ferredoxin (67 aa).

2 4Fe-4S ferredoxin-type domains span residues 3 to 31 (WKVS…MNDE) and 36 to 67 (PKVE…IEEA). Positions 12, 15, and 18 each coordinate [4Fe-4S] cluster. Cys-22 and Cys-49 are disulfide-bonded. Cys-57 contacts [4Fe-4S] cluster.

Requires [4Fe-4S] cluster as cofactor. It depends on [3Fe-4S] cluster as a cofactor.

Its function is as follows. Ferredoxins are iron-sulfur proteins that transfer electrons in a wide variety of metabolic reactions. This chain is Ferredoxin (fdxA), found in Pyrococcus abyssi (strain GE5 / Orsay).